We begin with the raw amino-acid sequence, 491 residues long: COP9 signalosome complex subunit 1 (491 aa).

Residues 269 to 431 form the PCI domain; sequence CLLLASFDHC…KILYARDVDQ (163 aa). The interval 465 to 491 is disordered; it reads HVKSPPREGSQGELTPANSQSRMSTNM. Serine 468 and serine 474 each carry phosphoserine. A compositionally biased stretch (polar residues) spans 476-491; it reads GELTPANSQSRMSTNM. Position 479 is a phosphothreonine (threonine 479). A Phosphoserine modification is found at serine 483.

Belongs to the CSN1 family. In terms of assembly, component of the CSN complex, composed of COPS1/GPS1, COPS2, COPS3, COPS4, COPS5, COPS6, COPS7 (COPS7A or COPS7B), COPS8 and COPS9 isoform 1. In the complex, it probably interacts directly with COPS2, COPS3, COPS4 and COPS5. Interacts directly with inositol kinase ITPK1. Interacts with CAPN8. Interacts with USP48. Interacts with ASB4; this interaction negatively regulates GPS1. As to expression, widely expressed.

The protein localises to the cytoplasm. It is found in the nucleus. Essential component of the COP9 signalosome complex (CSN), a complex involved in various cellular and developmental processes. The CSN complex is an essential regulator of the ubiquitin (Ubl) conjugation pathway by mediating the deneddylation of the cullin subunits of SCF-type E3 ligase complexes, leading to decrease the Ubl ligase activity of SCF-type complexes such as SCF, CSA or DDB2. The complex is also involved in phosphorylation of p53/TP53, c-jun/JUN, IkappaBalpha/NFKBIA, ITPK1 and IRF8/ICSBP, possibly via its association with CK2 and PKD kinases. CSN-dependent phosphorylation of TP53 and JUN promotes and protects degradation by the Ubl system, respectively. Suppresses G-protein- and mitogen-activated protein kinase-mediated signal transduction. The chain is COP9 signalosome complex subunit 1 (GPS1) from Homo sapiens (Human).